A 149-amino-acid polypeptide reads, in one-letter code: Arginine regulator (149 aa).

Belongs to the ArgR family.

It localises to the cytoplasm. Its pathway is amino-acid degradation; L-arginine degradation via ADI pathway. Regulates the transcription of the arc operon, involved in arginine catabolism. In Bacillus cereus (strain ATCC 14579 / DSM 31 / CCUG 7414 / JCM 2152 / NBRC 15305 / NCIMB 9373 / NCTC 2599 / NRRL B-3711), this protein is Arginine regulator (argR1).